The sequence spans 321 residues: Protein ZAR1-like (321 aa).

The interval 110 to 214 is disordered; the sequence is RTLSSCSPWD…GDAASEPLRR (105 aa). Residues 145 to 154 show a composition bias toward basic and acidic residues; sequence LRRDGDEAES. The segment at 222-307 adopts a 3CxxC-type zinc-finger fold; it reads PKYGYFHCKD…QELCGRCKDK (86 aa).

It belongs to the ZAR1 family. Interacts with YBX2.

Its subcellular location is the cytoplasm. The protein resides in the cytoplasmic ribonucleoprotein granule. Functionally, mRNA-binding protein required for maternal mRNA storage, translation and degradation during oocyte maturation. Probably promotes formation of some phase-separated membraneless compartment that stores maternal mRNAs in oocytes: acts by undergoing liquid-liquid phase separation upon binding to maternal mRNAs. Binds to the 3'-UTR of maternal mRNAs, inhibiting their translation. The sequence is that of Protein ZAR1-like from Homo sapiens (Human).